Consider the following 231-residue polypeptide: Large ribosomal subunit protein uL1 (231 aa).

This sequence belongs to the universal ribosomal protein uL1 family. In terms of assembly, part of the 50S ribosomal subunit.

Binds directly to 23S rRNA. The L1 stalk is quite mobile in the ribosome, and is involved in E site tRNA release. Functionally, protein L1 is also a translational repressor protein, it controls the translation of the L11 operon by binding to its mRNA. The sequence is that of Large ribosomal subunit protein uL1 from Allorhizobium ampelinum (strain ATCC BAA-846 / DSM 112012 / S4) (Agrobacterium vitis (strain S4)).